Consider the following 424-residue polypeptide: Ornithine aminotransferase (424 aa).

An N6-(pyridoxal phosphate)lysine modification is found at lysine 272. Residue lysine 390 forms a Glycyl lysine isopeptide (Lys-Gly) (interchain with G-Cter in ubiquitin) linkage.

It belongs to the class-III pyridoxal-phosphate-dependent aminotransferase family. The cofactor is pyridoxal 5'-phosphate.

The protein resides in the cytoplasm. It carries out the reaction a 2-oxocarboxylate + L-ornithine = L-glutamate 5-semialdehyde + an L-alpha-amino acid. Its pathway is amino-acid biosynthesis; L-proline biosynthesis; L-glutamate 5-semialdehyde from L-ornithine: step 1/1. With respect to regulation, by arginine and urea. In terms of biological role, catalyzes the transamination of ornithine into L-glutamate gamma-semialdehyde, the second step of arginine degradation. The sequence is that of Ornithine aminotransferase (CAR2) from Saccharomyces cerevisiae (strain ATCC 204508 / S288c) (Baker's yeast).